A 278-amino-acid chain; its full sequence is Orotidine 5'-phosphate decarboxylase (278 aa).

Catalysis depends on lysine 96, which acts as the Proton donor.

The protein belongs to the OMP decarboxylase family. Type 2 subfamily.

The enzyme catalyses orotidine 5'-phosphate + H(+) = UMP + CO2. Its pathway is pyrimidine metabolism; UMP biosynthesis via de novo pathway; UMP from orotate: step 2/2. This Salinispora arenicola (strain CNS-205) protein is Orotidine 5'-phosphate decarboxylase.